Reading from the N-terminus, the 193-residue chain is dTTP/UTP pyrophosphatase (193 aa).

Asp-75 serves as the catalytic Proton acceptor.

It belongs to the Maf family. YhdE subfamily. The cofactor is a divalent metal cation.

The protein localises to the cytoplasm. The enzyme catalyses dTTP + H2O = dTMP + diphosphate + H(+). It catalyses the reaction UTP + H2O = UMP + diphosphate + H(+). Its function is as follows. Nucleoside triphosphate pyrophosphatase that hydrolyzes dTTP and UTP. May have a dual role in cell division arrest and in preventing the incorporation of modified nucleotides into cellular nucleic acids. The polypeptide is dTTP/UTP pyrophosphatase (Koribacter versatilis (strain Ellin345)).